Reading from the N-terminus, the 183-residue chain is Capsid protein (183 aa).

The tract at residues 136-183 (NAPILSTLPETTVVRRRGRSPRRRTPSPRRRRSQSPRRRRSQSPASQC) is disordered. The segment covering 149 to 176 (VRRRGRSPRRRTPSPRRRRSQSPRRRRS) has biased composition (basic residues). Phosphoserine; by host occurs at positions 155, 162, and 170. The stretch at 155–161 (SPRRRTP) is one 1; half-length repeat. The segment at 155–177 (SPRRRTPSPRRRRSQSPRRRRSQ) is 3 X 8 AA repeats of S-P-R-R-R-[PR]-S-Q. Positions 158–175 (RRTPSPRRRRSQSPRRRR) match the Bipartite nuclear localization signal motif. 2 consecutive repeat copies span residues 162-169 (SPRRRRSQ) and 170-177 (SPRRRRSQ). Residues 177-183 (QSPASQC) form an RNA binding region.

The protein belongs to the orthohepadnavirus core antigen family. In terms of assembly, homodimerizes, then multimerizes. Interacts with cytosol exposed regions of viral L glycoprotein present in the reticulum-to-Golgi compartment. Interacts with human FLNB. Phosphorylated form interacts with host importin alpha; this interaction depends on the exposure of the NLS, which itself depends upon genome maturation and/or phosphorylation of the capsid protein. Interacts with host NUP153. In terms of processing, phosphorylated by host SRPK1, SRPK2, and maybe protein kinase C or GAPDH. Phosphorylation is critical for pregenomic RNA packaging. Protein kinase C phosphorylation is stimulated by HBx protein and may play a role in transport of the viral genome to the nucleus at the late step during the viral replication cycle.

Its subcellular location is the virion. It is found in the host cytoplasm. Self assembles to form an icosahedral capsid. Most capsids appear to be large particles with an icosahedral symmetry of T=4 and consist of 240 copies of capsid protein, though a fraction forms smaller T=3 particles consisting of 180 capsid proteins. Entering capsids are transported along microtubules to the nucleus. Phosphorylation of the capsid is thought to induce exposure of nuclear localization signal in the C-terminal portion of the capsid protein that allows binding to the nuclear pore complex via the importin (karyopherin-) alpha and beta. Capsids are imported in intact form through the nuclear pore into the nuclear basket, where it probably binds NUP153. Only capsids that contain the mature viral genome can release the viral DNA and capsid protein into the nucleoplasm. Immature capsids get stuck in the basket. Capsids encapsulate the pre-genomic RNA and the P protein. Pre-genomic RNA is reverse-transcribed into DNA while the capsid is still in the cytoplasm. The capsid can then either be directed to the nucleus, providing more genomes for transcription, or bud through the endoplasmic reticulum to provide new virions. The sequence is that of Capsid protein from Hylobatidae (gibbons).